Consider the following 729-residue polypeptide: Phosphoribosylformylglycinamidine synthase subunit PurL (729 aa).

Residue His54 is part of the active site. The ATP site is built by Tyr57 and Lys96. Mg(2+) is bound at residue Glu98. Substrate is bound by residues Ser99–His102 and Arg121. Catalysis depends on His100, which acts as the Proton acceptor. Asp122 serves as a coordination point for Mg(2+). Position 245 (Gln245) interacts with substrate. Position 273 (Asp273) interacts with Mg(2+). Substrate is bound at residue Glu317 to Gln319. ATP contacts are provided by Asp495 and Gly532. Asn533 contacts Mg(2+). Ser535 is a binding site for substrate.

This sequence belongs to the FGAMS family. As to quaternary structure, monomer. Part of the FGAM synthase complex composed of 1 PurL, 1 PurQ and 2 PurS subunits.

The protein localises to the cytoplasm. It catalyses the reaction N(2)-formyl-N(1)-(5-phospho-beta-D-ribosyl)glycinamide + L-glutamine + ATP + H2O = 2-formamido-N(1)-(5-O-phospho-beta-D-ribosyl)acetamidine + L-glutamate + ADP + phosphate + H(+). Its pathway is purine metabolism; IMP biosynthesis via de novo pathway; 5-amino-1-(5-phospho-D-ribosyl)imidazole from N(2)-formyl-N(1)-(5-phospho-D-ribosyl)glycinamide: step 1/2. Functionally, part of the phosphoribosylformylglycinamidine synthase complex involved in the purines biosynthetic pathway. Catalyzes the ATP-dependent conversion of formylglycinamide ribonucleotide (FGAR) and glutamine to yield formylglycinamidine ribonucleotide (FGAM) and glutamate. The FGAM synthase complex is composed of three subunits. PurQ produces an ammonia molecule by converting glutamine to glutamate. PurL transfers the ammonia molecule to FGAR to form FGAM in an ATP-dependent manner. PurS interacts with PurQ and PurL and is thought to assist in the transfer of the ammonia molecule from PurQ to PurL. The chain is Phosphoribosylformylglycinamidine synthase subunit PurL from Staphylococcus epidermidis (strain ATCC 12228 / FDA PCI 1200).